Consider the following 89-residue polypeptide: Dynein light chain 1, cytoplasmic (89 aa).

Lysine 36 carries the post-translational modification N6-acetyllysine. Residue lysine 43 forms a Glycyl lysine isopeptide (Lys-Gly) (interchain with G-Cter in SUMO2) linkage. Positions 67-89 (THETKHFIYFYLGQVAILLFKSG) are interaction with ESR1. Serine 88 carries the phosphoserine modification.

It belongs to the dynein light chain family. Homodimer. Monomer; the monomeric form is incapable of binding to target proteins. The cytoplasmic dynein 1 complex consists of two catalytic heavy chains (HCs) and a number of non-catalytic subunits presented by intermediate chains (ICs), light intermediate chains (LICs) and light chains (LCs); the composition seems to vary in respect to the IC, LIC and LC composition. The heavy chain homodimer serves as a scaffold for the probable homodimeric assembly of the respective non-catalytic subunits. The ICs and LICs bind directly to the HC dimer and the LCs assemble on the IC dimer. Interacts with TXNDC17. Interacts with WWC1 and ESR1. The WWC1-DYNLL1 interaction is mandatory for the recruitment and transactivation functions of ESR1 or DYNLL1 to the target chromatin. Interacts with BCL2L11. Interacts with BCL2; the interaction is greatly enhanced in the nucleus and in mitochondria upon induction of apoptosis. Interacts with PAK1; the interaction requires dimeric DYNLL1. Interacts with MYZAP. Part of an astrin (SPAG5)-kinastrin (SKAP) complex containing KNSTRN, SPAG5, PLK1, DYNLL1 and SGO2. Interacts with ATMIN; this interaction inhibits ATMIN transcriptional activity and hence may play a role in a feedback loop whereby DYNLL1 inhibits transactivation of its own promoter by ATMIN. Interacts with NEK9 (not phosphorylated at 'Ser-944'). Interacts with BICD2. Interacts with BCAS1. Interacts with Basson/BSN. Interacts with HDAC6. Interacts with TPPP. Interacts with AMBRA1 (via TQT motifs); tethering AMBRA1 to the cytoskeleton. Interacts with FAM83D/CHICA (via C-terminus). Interacts with HMMR, SPAG5/Astrin and KNSTRN/Kinastrin. Interacts with TLK2. Interacts with NOS1. Interacts with WWC1, WWC2 and WWC3. Interacts with MRE11; inhibiting MRE11 homodimerization and activity. As to quaternary structure, (Microbial infection) Interacts with bovine immunodeficiency virus Gag protein; this interaction is critical for intracellular microtubule-dependent viral genome transport. In terms of processing, phosphorylation at Ser-88 promotes recruitment to DNA double-strand breaks (DSBs) by TP53BP1 and ability to inhibit MRE11.

The protein resides in the cytoplasm. The protein localises to the cytoskeleton. It localises to the microtubule organizing center. Its subcellular location is the centrosome. It is found in the chromosome. The protein resides in the nucleus. The protein localises to the mitochondrion. Acts as one of several non-catalytic accessory components of the cytoplasmic dynein 1 complex that are thought to be involved in linking dynein to cargos and to adapter proteins that regulate dynein function. Cytoplasmic dynein 1 acts as a motor for the intracellular retrograde motility of vesicles and organelles along microtubules. May play a role in changing or maintaining the spatial distribution of cytoskeletal structures. In addition to its role in cytoskeleton and transport, acts as a protein-protein adapter, which inhibits and/or sequesters target proteins. Involved in the response to DNA damage by acting as a key regulator of DNA end resection: when phosphorylated at Ser-88, recruited to DNA double-strand breaks (DSBs) by TP53BP1 and acts by disrupting MRE11 dimerization, thereby inhibiting DNA end resection. In a subset of DSBs, DYNLL1 remains unphosphorylated and promotes the recruitment of the Shieldin complex. Binds and inhibits the catalytic activity of neuronal nitric oxide synthase/NOS1. Promotes transactivation functions of ESR1 and plays a role in the nuclear localization of ESR1. Regulates apoptotic activities of BCL2L11 by sequestering it to microtubules. Upon apoptotic stimuli the BCL2L11-DYNLL1 complex dissociates from cytoplasmic dynein and translocates to mitochondria and sequesters BCL2 thus neutralizing its antiapoptotic activity. The chain is Dynein light chain 1, cytoplasmic (DYNLL1) from Bos taurus (Bovine).